The sequence spans 525 residues: ATP synthase subunit beta, mitochondrial (525 aa).

The N-terminal 44 residues, 1–44, are a transit peptide targeting the mitochondrion; it reads MLKKQALSGIRRFSLATKQSFVKTSYKLPRKSWLNTAKFNTIRY. 203–210 serves as a coordination point for ATP; sequence GGAGVGKT.

Belongs to the ATPase alpha/beta chains family. In terms of assembly, F-type ATPases have 2 components, CF(1) - the catalytic core - and CF(0) - the membrane proton channel. CF(1) has five subunits: alpha(3), beta(3), gamma(1), delta(1), epsilon(1). CF(0) has three main subunits: a, b and c.

The protein resides in the mitochondrion. Its subcellular location is the mitochondrion inner membrane. The enzyme catalyses ATP + H2O + 4 H(+)(in) = ADP + phosphate + 5 H(+)(out). Functionally, mitochondrial membrane ATP synthase (F(1)F(0) ATP synthase or Complex V) produces ATP from ADP in the presence of a proton gradient across the membrane which is generated by electron transport complexes of the respiratory chain. F-type ATPases consist of two structural domains, F(1) - containing the extramembraneous catalytic core, and F(0) - containing the membrane proton channel, linked together by a central stalk and a peripheral stalk. During catalysis, ATP synthesis in the catalytic domain of F(1) is coupled via a rotary mechanism of the central stalk subunits to proton translocation. Subunits alpha and beta form the catalytic core in F(1). Rotation of the central stalk against the surrounding alpha(3)beta(3) subunits leads to hydrolysis of ATP in three separate catalytic sites on the beta subunits. The protein is ATP synthase subunit beta, mitochondrial (atp2) of Schizosaccharomyces pombe (strain 972 / ATCC 24843) (Fission yeast).